Consider the following 540-residue polypeptide: Putative sel1-like repeat-containing protein R815 (540 aa).

Sel1-like repeat units follow at residues 129-164, 165-200, 201-236, 237-272, 273-308, and 309-344; these read IDAQ…YKEN, LFGL…KHNY, PAVK…NQGY, PLAQ…NNGC, LYAT…SENY, and LLAI…NSTK.

The sequence is that of Putative sel1-like repeat-containing protein R815 from Acanthamoeba polyphaga (Amoeba).